A 241-amino-acid polypeptide reads, in one-letter code: Deoxyribose-phosphate aldolase (241 aa).

Aspartate 95 functions as the Proton donor/acceptor in the catalytic mechanism. Lysine 159 serves as the catalytic Schiff-base intermediate with acetaldehyde. Catalysis depends on lysine 188, which acts as the Proton donor/acceptor.

It belongs to the DeoC/FbaB aldolase family. DeoC type 1 subfamily.

It is found in the cytoplasm. The enzyme catalyses 2-deoxy-D-ribose 5-phosphate = D-glyceraldehyde 3-phosphate + acetaldehyde. The protein operates within carbohydrate degradation; 2-deoxy-D-ribose 1-phosphate degradation; D-glyceraldehyde 3-phosphate and acetaldehyde from 2-deoxy-alpha-D-ribose 1-phosphate: step 2/2. Its function is as follows. Catalyzes a reversible aldol reaction between acetaldehyde and D-glyceraldehyde 3-phosphate to generate 2-deoxy-D-ribose 5-phosphate. The sequence is that of Deoxyribose-phosphate aldolase from Rhodopirellula baltica (strain DSM 10527 / NCIMB 13988 / SH1).